Consider the following 461-residue polypeptide: uncharacterized protein (461 aa).

Disordered stretches follow at residues 254-273 and 368-414; these read NNNN…NNNN and QPSQ…NNNS. Low complexity predominate over residues 381 to 413; the sequence is NNNNNNNNNNNNNNNNNNNNNNNNNNNNNNNNN.

This is an uncharacterized protein from Dictyostelium discoideum (Social amoeba).